Consider the following 488-residue polypeptide: Transmembrane protein 39A (488 aa).

2 N-linked (GlcNAc...) asparagine glycosylation sites follow: N31 and N39. Helical transmembrane passes span S72–I92, T110–A130, V154–L174, S182–F202, E287–V307, C319–P339, L420–L440, and N446–L466.

This sequence belongs to the TMEM39 family. Interacts with SACM1L, SEC23A and SEC24A.

It localises to the endoplasmic reticulum membrane. In terms of biological role, regulates autophagy by controlling the spatial distribution and levels of the intracellular phosphatidylinositol 4-phosphate (PtdIns(4)P) pools. Modulates (PtdIns(4)P) levels by regulating the ER-to-Golgi trafficking of the phosphatidylinositide phosphatase SACM1L. The polypeptide is Transmembrane protein 39A (TMEM39A) (Bos taurus (Bovine)).